A 378-amino-acid chain; its full sequence is Dual-specificity RNA methyltransferase RlmN (378 aa).

Glutamate 96 serves as the catalytic Proton acceptor. A Radical SAM core domain is found at 102–340; the sequence is DNGRGTLCVS…ATVRTTRGDD (239 aa). An intrachain disulfide couples cysteine 109 to cysteine 345. 3 residues coordinate [4Fe-4S] cluster: cysteine 116, cysteine 120, and cysteine 123. Residues 170 to 171, serine 202, 224 to 226, and asparagine 302 contribute to the S-adenosyl-L-methionine site; these read GE and SLH. Cysteine 345 serves as the catalytic S-methylcysteine intermediate.

This sequence belongs to the radical SAM superfamily. RlmN family. Requires [4Fe-4S] cluster as cofactor.

The protein localises to the cytoplasm. The enzyme catalyses adenosine(2503) in 23S rRNA + 2 reduced [2Fe-2S]-[ferredoxin] + 2 S-adenosyl-L-methionine = 2-methyladenosine(2503) in 23S rRNA + 5'-deoxyadenosine + L-methionine + 2 oxidized [2Fe-2S]-[ferredoxin] + S-adenosyl-L-homocysteine. It carries out the reaction adenosine(37) in tRNA + 2 reduced [2Fe-2S]-[ferredoxin] + 2 S-adenosyl-L-methionine = 2-methyladenosine(37) in tRNA + 5'-deoxyadenosine + L-methionine + 2 oxidized [2Fe-2S]-[ferredoxin] + S-adenosyl-L-homocysteine. In terms of biological role, specifically methylates position 2 of adenine 2503 in 23S rRNA and position 2 of adenine 37 in tRNAs. m2A2503 modification seems to play a crucial role in the proofreading step occurring at the peptidyl transferase center and thus would serve to optimize ribosomal fidelity. In Hahella chejuensis (strain KCTC 2396), this protein is Dual-specificity RNA methyltransferase RlmN.